The sequence spans 1005 residues: Espin-like protein (1005 aa).

ANK repeat units lie at residues 1–31, 35–64, 69–99, 103–132, 136–166, 170–200, 204–234, 238–267, and 270–299; these read MEKQRALVAAKDGDVATLERLLEAGALGPGI, LGAGLVHHATRAGHLDCVKFLVQRAQLPGN, NGATPAHDAAATGSLAELCWLVREGGCGLQD, SGVSPLHLAARFGHPVLVEWLLHEGHSATL, EGARPLHHAAVSGDLTCLKLLTAAHGSSVNR, SGASPLYLACQEGHLHLAQFLVKDCGADVHL, DGMSALHAAAARGHYSLVVWLVTFTDIGLTA, EGATALHFAARGGHTPILDRLLLMGTPILR, and WGGTPLHDAAENGQMECCQTLVSHHVDPSL. 2 disordered regions span residues 333–444 and 462–483; these read LMTP…ERGQ and LGAESSAEAQDNGGSSGPTEQA. The segment covering 334 to 346 has biased composition (pro residues); the sequence is MTPPPPPFPPPPL. Polar residues predominate over residues 468-480; the sequence is AEAQDNGGSSGPT. Residues 517–541 are a coiled coil; sequence LQLRRRCQEYESELGRLAAELQALL. Disordered stretches follow at residues 616–644, 695–730, and 773–795; these read GDEKPSTRPLQDTCREASASPPRSEAQRQ, RSGLASGEPRPGDTEEASDSGISCEEVPSEAGAAAG, and LRGQEAARSPGPPSPPSEGPRLG.

As to quaternary structure, interacts with MYO3A (via C-terminus). Interacts with MYO3B (via C-terminus).

It localises to the cell projection. The protein resides in the stereocilium. Its function is as follows. Binds to but does not cross-link actin. Required for the formation and maintenance of inner ear hair cell stereocilia and staircase formation. Essential for normal hearing. The sequence is that of Espin-like protein (ESPNL) from Homo sapiens (Human).